The primary structure comprises 200 residues: GTP-binding protein rho2 (200 aa).

15–22 (GDGACGKT) contacts GTP. The Effector region motif lies at 37-45 (YVPTVFENY). GTP is bound by residues 62 to 66 (DTAGQ) and 120 to 123 (MKAD). Cys-197 carries the cysteine methyl ester modification. Cys-197 carries S-geranylgeranyl cysteine lipidation. The propeptide at 198-200 (IIS) is removed in mature form.

This sequence belongs to the small GTPase superfamily. Rho family. In terms of assembly, interacts with pck2.

Its subcellular location is the cell membrane. In terms of biological role, involved in cell morphogenesis, the maintenance of growth direction, control of polarity and of cell wall integrity. Regulates the synthesis of alpha-D-glucan through activation of pck2. The chain is GTP-binding protein rho2 (rho2) from Schizosaccharomyces pombe (strain 972 / ATCC 24843) (Fission yeast).